We begin with the raw amino-acid sequence, 157 residues long: Phosphopantetheine adenylyltransferase (157 aa).

A substrate-binding site is contributed by Ser-8. ATP-binding positions include 8–9 (SF) and His-16. The substrate site is built by Lys-40, Thr-72, and Arg-86. Residues 87 to 89 (GLR), Glu-97, and 122 to 128 (HSFLSSS) contribute to the ATP site.

It belongs to the bacterial CoaD family. Homohexamer. It depends on Mg(2+) as a cofactor.

The protein localises to the cytoplasm. The catalysed reaction is (R)-4'-phosphopantetheine + ATP + H(+) = 3'-dephospho-CoA + diphosphate. It functions in the pathway cofactor biosynthesis; coenzyme A biosynthesis; CoA from (R)-pantothenate: step 4/5. Reversibly transfers an adenylyl group from ATP to 4'-phosphopantetheine, yielding dephospho-CoA (dPCoA) and pyrophosphate. The protein is Phosphopantetheine adenylyltransferase of Prochlorococcus marinus (strain MIT 9313).